The primary structure comprises 614 residues: Aspartate--tRNA ligase (614 aa).

Glu174 contacts L-aspartate. The tract at residues 198–201 (QLFK) is aspartate. Arg220 provides a ligand contact to L-aspartate. ATP contacts are provided by residues 220–222 (RDE) and Gln229. Residue His448 coordinates L-aspartate. Glu482 provides a ligand contact to ATP. Arg489 is an L-aspartate binding site. 534–537 (GLDR) is an ATP binding site.

The protein belongs to the class-II aminoacyl-tRNA synthetase family. Type 1 subfamily. As to quaternary structure, homodimer.

The protein localises to the cytoplasm. It catalyses the reaction tRNA(Asp) + L-aspartate + ATP = L-aspartyl-tRNA(Asp) + AMP + diphosphate. In terms of biological role, catalyzes the attachment of L-aspartate to tRNA(Asp) in a two-step reaction: L-aspartate is first activated by ATP to form Asp-AMP and then transferred to the acceptor end of tRNA(Asp). This chain is Aspartate--tRNA ligase, found in Lactobacillus acidophilus (strain ATCC 700396 / NCK56 / N2 / NCFM).